A 328-amino-acid polypeptide reads, in one-letter code: Eukaryotic translation initiation factor 3 subunit I (328 aa).

WD repeat units lie at residues 8 to 49 (GHER…GTYE), 50 to 89 (GHTG…QLYK), 145 to 184 (TRES…FVES), 189 to 228 (NSGS…VIKT), and 286 to 327 (GHFG…FKYT).

Belongs to the eIF-3 subunit I family. As to quaternary structure, component of the eukaryotic translation initiation factor 3 (eIF-3) complex. The eIF-3 complex appears to include tif32/eif3a, SPAC25G10.08/eif3b, tif33/eif3c, SPBC4C3.07/eif3f, tif35/eif3g and sum1/eif3i. This set of common subunits may also associate exclusively with either moe1/eif3d and int6/eif3e, or with SPAC821.05/eif3h and SPAC1751.03/eif3m. The eIF-3 complex may also include SPAC3A12.13c/eif3j.

Its subcellular location is the cytoplasm. The protein localises to the nucleus. Its function is as follows. Component of the eukaryotic translation initiation factor 3 (eIF-3) complex, which is involved in protein synthesis of a specialized repertoire of mRNAs and, together with other initiation factors, stimulates binding of mRNA and methionyl-tRNAi to the 40S ribosome. The eIF-3 complex specifically targets and initiates translation of a subset of mRNAs involved in cell proliferation. The protein is Eukaryotic translation initiation factor 3 subunit I (sum1) of Schizosaccharomyces pombe (strain 972 / ATCC 24843) (Fission yeast).